Reading from the N-terminus, the 236-residue chain is Exotoxin type H (236 aa).

The signal sequence occupies residues 1-32 (MRYNCRYSHIDKKIYSMIICLSFLLYSNVVQA).

The protein belongs to the staphylococcal/streptococcal toxin family.

It localises to the secreted. Its function is as follows. Mitogenic for human peripheral blood lymphocytes. The polypeptide is Exotoxin type H (speH) (Streptococcus pyogenes serotype M1).